Consider the following 52-residue polypeptide: Insulin (52 aa).

3 cysteine pairs are disulfide-bonded: Cys-7-Cys-38, Cys-19-Cys-51, and Cys-37-Cys-42.

The protein belongs to the insulin family. As to quaternary structure, heterodimer of a B chain and an A chain linked by two disulfide bonds.

Its subcellular location is the secreted. Insulin decreases blood glucose concentration. It increases cell permeability to monosaccharides, amino acids and fatty acids. It accelerates glycolysis, the pentose phosphate cycle, and glycogen synthesis in liver. This is Insulin (ins) from Amia calva (Bowfin).